The sequence spans 135 residues: Ribonuclease P protein component (135 aa).

The tract at residues 115–135 (ETEPVSPVSPTSLPQNERGSP) is disordered. Positions 122–135 (VSPTSLPQNERGSP) are enriched in polar residues.

Belongs to the RnpA family. Consists of a catalytic RNA component (M1 or rnpB) and a protein subunit.

It catalyses the reaction Endonucleolytic cleavage of RNA, removing 5'-extranucleotides from tRNA precursor.. In terms of biological role, RNaseP catalyzes the removal of the 5'-leader sequence from pre-tRNA to produce the mature 5'-terminus. It can also cleave other RNA substrates such as 4.5S RNA. The protein component plays an auxiliary but essential role in vivo by binding to the 5'-leader sequence and broadening the substrate specificity of the ribozyme. This is Ribonuclease P protein component from Chloroflexus aggregans (strain MD-66 / DSM 9485).